The chain runs to 94 residues: MRKYETVFILNPALDEEGYKANVEKFKGVIENAGGTVDNVDLWGKRKLAYEVKKVSEGYYTLMNFTADTELPKELDRVFRITDTVIRHMIITQE.

It belongs to the bacterial ribosomal protein bS6 family.

In terms of biological role, binds together with bS18 to 16S ribosomal RNA. The polypeptide is Small ribosomal subunit protein bS6 (Clostridium botulinum (strain Kyoto / Type A2)).